The primary structure comprises 198 residues: NAD(P)H dehydrogenase (quinone) (198 aa).

The 186-residue stretch at 4–189 folds into the Flavodoxin-like domain; it reads VLVLYYSMYG…ALARYQGRHV (186 aa). FMN is bound by residues 10-15 and 78-80; these read SMYGHV and TRF. NAD(+) is bound at residue tyrosine 12. Tryptophan 98 serves as a coordination point for substrate. FMN-binding positions include 113-118 and histidine 133; that span reads STGTGG.

The protein belongs to the WrbA family. Requires FMN as cofactor.

The enzyme catalyses a quinone + NADH + H(+) = a quinol + NAD(+). It catalyses the reaction a quinone + NADPH + H(+) = a quinol + NADP(+). This is NAD(P)H dehydrogenase (quinone) from Halorhodospira halophila (strain DSM 244 / SL1) (Ectothiorhodospira halophila (strain DSM 244 / SL1)).